Reading from the N-terminus, the 835-residue chain is Phenylalanine--tRNA ligase beta subunit (835 aa).

Residues 44–160 (PATTGPLVLG…ESGQPGDDAR (117 aa)) form the tRNA-binding domain. The B5 domain maps to 419–494 (PTMPSITMPV…RLEGLEAIPT (76 aa)). The Mg(2+) site is built by aspartate 472, aspartate 478, glutamate 481, and glutamate 482. An FDX-ACB domain is found at 741–834 (SAFPALHQDI…AKERLGAEMR (94 aa)).

The protein belongs to the phenylalanyl-tRNA synthetase beta subunit family. Type 1 subfamily. In terms of assembly, tetramer of two alpha and two beta subunits. It depends on Mg(2+) as a cofactor.

Its subcellular location is the cytoplasm. The catalysed reaction is tRNA(Phe) + L-phenylalanine + ATP = L-phenylalanyl-tRNA(Phe) + AMP + diphosphate + H(+). The chain is Phenylalanine--tRNA ligase beta subunit from Corynebacterium efficiens (strain DSM 44549 / YS-314 / AJ 12310 / JCM 11189 / NBRC 100395).